We begin with the raw amino-acid sequence, 493 residues long: Galactose-1-phosphate uridylyltransferase (493 aa).

It belongs to the galactose-1-phosphate uridylyltransferase type 2 family.

Its subcellular location is the cytoplasm. The catalysed reaction is alpha-D-galactose 1-phosphate + UDP-alpha-D-glucose = alpha-D-glucose 1-phosphate + UDP-alpha-D-galactose. The protein operates within carbohydrate metabolism; galactose metabolism. This is Galactose-1-phosphate uridylyltransferase from Streptococcus pneumoniae serotype 19F (strain G54).